The chain runs to 415 residues: MNNELIIKGKKAKEASYTLSFASTNEKDNGLLKISEFLIKRCDEILEENKKDLEKAIEKGTSNAMLDRLKLDEERVKSIANAVADVVKLDDPIGEVTSMFKRPNGLRIGVQRVPLGVVGIIYEARPNVTADAAALCLKTGNAVILRGGSEAINSNLKIVEIISDALKEAGLPEGSVQILEDTSRETATDFMRLNDYLDVLIPRGGAGLIKAVVNNATVPVIETGVGNCHIYIDDEADINMGVDIIVNAKTSRPAVCNAAEKLLVNEKIAEEFLPVAIKALKEKGVEIRGCEKTKAIVNDINLATEEDWGKEYLDYILGVKVVKDLDEAISHINKYGTKHSESIVTKNYFNSEKFLQRVDAAAVYVNASTRFTDGGEFGFGAEIGISTQKLHARGPMGLKELTTNKYIIYGNGQIR.

This sequence belongs to the gamma-glutamyl phosphate reductase family.

Its subcellular location is the cytoplasm. The enzyme catalyses L-glutamate 5-semialdehyde + phosphate + NADP(+) = L-glutamyl 5-phosphate + NADPH + H(+). It participates in amino-acid biosynthesis; L-proline biosynthesis; L-glutamate 5-semialdehyde from L-glutamate: step 2/2. Functionally, catalyzes the NADPH-dependent reduction of L-glutamate 5-phosphate into L-glutamate 5-semialdehyde and phosphate. The product spontaneously undergoes cyclization to form 1-pyrroline-5-carboxylate. The sequence is that of Gamma-glutamyl phosphate reductase from Clostridium perfringens (strain 13 / Type A).